A 262-amino-acid chain; its full sequence is MAVLSMKQLLEAGVHFGHQTRRWNPKMKPYIFTERNGIYIIDLQKTVKMIDDAYNFVKEEAQNGGVFLFVGTKKQAQDAIAEEATRAGQYYVNHRWLGGTLTNWNTIQTRIKRLKDIKKMATDGTFDVLPKKEVSLLKKQQDKLEKFLGGIEDMPRIPDVLFIVDPRKEKIAVQEAQKLNIPIVAMVDTNTDPDDIDVIIPSNDDAIRAVRLITSKMADAIIEGNQGEDQDDAQEQQVAADKKADSMEDIVEAVEGDNKSAK.

The disordered stretch occupies residues 224-246; sequence GNQGEDQDDAQEQQVAADKKADS.

The protein belongs to the universal ribosomal protein uS2 family.

This chain is Small ribosomal subunit protein uS2, found in Lacticaseibacillus casei (strain BL23) (Lactobacillus casei).